The sequence spans 304 residues: Glutaminase (304 aa).

Residues S61, N113, E158, N165, Y189, Y240, and V258 each coordinate substrate.

Belongs to the glutaminase family. Homotetramer.

The enzyme catalyses L-glutamine + H2O = L-glutamate + NH4(+). In Fusobacterium nucleatum subsp. nucleatum (strain ATCC 25586 / DSM 15643 / BCRC 10681 / CIP 101130 / JCM 8532 / KCTC 2640 / LMG 13131 / VPI 4355), this protein is Glutaminase.